The chain runs to 320 residues: Heterogeneous nuclear ribonucleoprotein A1-like 3 (320 aa).

2 RRM domains span residues 14 to 97 (RKLF…DSQR) and 105 to 184 (KKIF…LSKQ). 2 disordered regions span residues 182–218 (SKQE…NFGR) and 271–320 (SNFG…GRRF). Gly residues predominate over residues 197 to 218 (SGSGNFGGGRGGGFGGNDNFGR). The segment covering 308-320 (SSSSSSYGSGRRF) has biased composition (low complexity).

This chain is Heterogeneous nuclear ribonucleoprotein A1-like 3, found in Homo sapiens (Human).